The primary structure comprises 256 residues: Ribosomal RNA small subunit methyltransferase A (256 aa).

Asn-12, Leu-14, Gly-39, Glu-60, Asp-85, and Asn-103 together coordinate S-adenosyl-L-methionine.

Belongs to the class I-like SAM-binding methyltransferase superfamily. rRNA adenine N(6)-methyltransferase family. RsmA subfamily.

Its subcellular location is the cytoplasm. The enzyme catalyses adenosine(1518)/adenosine(1519) in 16S rRNA + 4 S-adenosyl-L-methionine = N(6)-dimethyladenosine(1518)/N(6)-dimethyladenosine(1519) in 16S rRNA + 4 S-adenosyl-L-homocysteine + 4 H(+). Functionally, specifically dimethylates two adjacent adenosines (A1518 and A1519) in the loop of a conserved hairpin near the 3'-end of 16S rRNA in the 30S particle. May play a critical role in biogenesis of 30S subunits. The polypeptide is Ribosomal RNA small subunit methyltransferase A (Legionella pneumophila subsp. pneumophila (strain Philadelphia 1 / ATCC 33152 / DSM 7513)).